The primary structure comprises 497 residues: tRNA (adenine(58)-N(1))-methyltransferase non-catalytic subunit TRM6 (497 aa).

Disordered stretches follow at residues M1 to I20 and T69 to D100. Residues K79–D100 are compositionally biased toward basic and acidic residues. Residue N94–Q104 coordinates substrate. A Phosphothreonine modification is found at T107. Residues K145–Y154 and R175–H182 each bind substrate. Residues S276–R354 form a disordered region. S298 and S305 each carry phosphoserine. Basic and acidic residues predominate over residues D327–R354. Residues R349, R377, R415–L423, and Q434–H441 each bind substrate. The interval S472–S497 is disordered. Basic and acidic residues predominate over residues E478–S497.

The protein belongs to the TRM6/GCD10 family. In terms of assembly, heterotetramer; composed of two copies of TRMT6 and two copies of TRMT61A. In terms of tissue distribution, expressed in brain, liver, testis and ovary.

The protein resides in the nucleus. Functionally, substrate-binding subunit of tRNA (adenine-N(1)-)-methyltransferase, which catalyzes the formation of N(1)-methyladenine at position 58 (m1A58) in initiator methionyl-tRNA. Together with the TRMT61A catalytic subunit, part of a mRNA N(1)-methyltransferase complex that mediates methylation of adenosine residues at the N(1) position of a small subset of mRNAs: N(1) methylation takes place in tRNA T-loop-like structures of mRNAs and is only present at low stoichiometries. The polypeptide is tRNA (adenine(58)-N(1))-methyltransferase non-catalytic subunit TRM6 (TRMT6) (Homo sapiens (Human)).